The chain runs to 486 residues: Galactose-1-phosphate uridylyltransferase (486 aa).

The protein belongs to the galactose-1-phosphate uridylyltransferase type 2 family.

The protein localises to the cytoplasm. The enzyme catalyses alpha-D-galactose 1-phosphate + UDP-alpha-D-glucose = alpha-D-glucose 1-phosphate + UDP-alpha-D-galactose. It functions in the pathway carbohydrate metabolism; galactose metabolism. The chain is Galactose-1-phosphate uridylyltransferase from Pediococcus pentosaceus (strain ATCC 25745 / CCUG 21536 / LMG 10740 / 183-1w).